Consider the following 941-residue polypeptide: Cilia- and flagella-associated protein 69 (941 aa).

A compositionally biased stretch (low complexity) spans Met1–Ala10. Residues Met1–Ser23 are disordered.

It localises to the cell projection. Its subcellular location is the cilium. The protein localises to the flagellum. Its function is as follows. Cilium- and flagellum-associated protein. In the olfactory epithelium, regulates the speed of activation and termination of the odor response and thus contributes to the robustness of olfactory transduction pathways. Required for sperm flagellum assembly and stability. The protein is Cilia- and flagella-associated protein 69 of Papio anubis (Olive baboon).